The chain runs to 335 residues: Biotin synthase (335 aa).

In terms of domain architecture, Radical SAM core spans 43-269 (YFGKKVKLNM…INPTKEIRIA (227 aa)). [4Fe-4S] cluster is bound by residues Cys-61, Cys-65, and Cys-68. Cys-104, Cys-137, Cys-197, and Arg-267 together coordinate [2Fe-2S] cluster.

The protein belongs to the radical SAM superfamily. Biotin synthase family. Homodimer. [4Fe-4S] cluster is required as a cofactor. Requires [2Fe-2S] cluster as cofactor.

The catalysed reaction is (4R,5S)-dethiobiotin + (sulfur carrier)-SH + 2 reduced [2Fe-2S]-[ferredoxin] + 2 S-adenosyl-L-methionine = (sulfur carrier)-H + biotin + 2 5'-deoxyadenosine + 2 L-methionine + 2 oxidized [2Fe-2S]-[ferredoxin]. The protein operates within cofactor biosynthesis; biotin biosynthesis; biotin from 7,8-diaminononanoate: step 2/2. Functionally, catalyzes the conversion of dethiobiotin (DTB) to biotin by the insertion of a sulfur atom into dethiobiotin via a radical-based mechanism. This is Biotin synthase from Staphylococcus aureus (strain MRSA252).